The sequence spans 966 residues: Alanine--tRNA ligase (966 aa).

Residues H646, H650, C750, and H754 each coordinate Zn(2+). Positions 927 to 949 are disordered; that stretch reads DRLGGGGGGRPSLASAGGRDPEA.

The protein belongs to the class-II aminoacyl-tRNA synthetase family. The cofactor is Zn(2+).

It localises to the cytoplasm. It carries out the reaction tRNA(Ala) + L-alanine + ATP = L-alanyl-tRNA(Ala) + AMP + diphosphate. Its function is as follows. Catalyzes the attachment of alanine to tRNA(Ala) in a two-step reaction: alanine is first activated by ATP to form Ala-AMP and then transferred to the acceptor end of tRNA(Ala). Also edits incorrectly charged Ser-tRNA(Ala) and Gly-tRNA(Ala) via its editing domain. This Salinibacter ruber (strain DSM 13855 / M31) protein is Alanine--tRNA ligase.